A 313-amino-acid chain; its full sequence is RHOMBOID-like protein 7 (313 aa).

Positions 1-11 (MLSTAAEEDPE) are enriched in acidic residues. The segment at 1–24 (MLSTAAEEDPEGGSRETNNGGETT) is disordered. Residues 15–24 (RETNNGGETT) show a composition bias toward polar residues. 7 helical membrane passes run 31–51 (SWII…VMYY), 112–132 (WLHA…YIGV), 143–163 (VGTI…LFLE), 166–186 (ISVG…SELL), 196–216 (GVAI…GTLP), 221–241 (FAHI…LIHP), and 269–289 (LCIV…VILF). The active-site Nucleophile is serine 171. The Charge relay system role is filled by histidine 223.

This sequence belongs to the peptidase S54 family.

It is found in the membrane. The enzyme catalyses Cleaves type-1 transmembrane domains using a catalytic dyad composed of serine and histidine that are contributed by different transmembrane domains.. Functionally, probable rhomboid-type serine protease that catalyzes intramembrane proteolysis. May function in embryo development. This chain is RHOMBOID-like protein 7, found in Arabidopsis thaliana (Mouse-ear cress).